The following is a 727-amino-acid chain: Synaptic vesicle glycoprotein 2C (727 aa).

The segment at 1-57 (MEDSYKDRTSLMKGAKDIAKEVKKQTVKKVNQAVDRAQDEYTQRSYSRFQDEEDDDD) is interaction with SYT1. Topologically, residues 1-154 (MEDSYKDRTS…CGHGRFQWAL (154 aa)) are cytoplasmic. The interval 22–128 (VKKQTVKKVN…DRRELESERR (107 aa)) is disordered. Ser75 and Ser76 each carry phosphoserine. The residue at position 79 (Thr79) is a Phosphothreonine. Basic and acidic residues predominate over residues 113-128 (KGDEYKDRRELESERR). A helical membrane pass occupies residues 155 to 175 (FFVLGMALMADGVEVFVVGFV). The Extracellular segment spans residues 176–191 (LPSAETDLCIPNSGSG). The chain crosses the membrane as a helical span at residues 192–212 (WLGSIVYLGMMVGAFFWGGLA). Over 213 to 226 (DKVGRKQSLLICMS) the chain is Cytoplasmic. The helical transmembrane segment at 227–247 (VNGFFAFLSSFVQGYGFFLVC) threads the bilayer. Residue Arg248 is a topological domain, extracellular. Residues 249–269 (LLSGFGIGGAIPTVFSYFAEV) form a helical membrane-spanning segment. At 270-280 (LAREKRGEHLS) the chain is on the cytoplasmic side. A helical membrane pass occupies residues 281-301 (WLCMFWMIGGIYASAMAWAII). Residues 302–320 (PHYGWSFSMGSAYQFHSWR) are Extracellular-facing. Residues 321 to 341 (VFVIVCALPCVSSVVALTFMP) traverse the membrane as a helical segment. The Cytoplasmic segment spans residues 342 to 437 (ESPRFLLEVG…PVRENTIKLT (96 aa)). A helical membrane pass occupies residues 438–458 (IVWFTLSFGYYGLSVWFPDVI). The Extracellular portion of the chain corresponds to 459–578 (KHLQSDEYAL…CQITFDDDYS (120 aa)). Tyr466 bears the Phosphotyrosine mark. N-linked (GlcNAc...) asparagine glycosylation is found at Asn480, Asn484, Asn534, Asn559, and Asn565. A helical membrane pass occupies residues 579–599 (AYWIYFVNFLGTLAVLPGNIV). The Cytoplasmic segment spans residues 600–609 (SALLMDRIGR). The chain crosses the membrane as a helical span at residues 610 to 630 (LTMLGGSMVLSGISCFFLWFG). Residues 631–636 (TSESMM) lie on the Extracellular side of the membrane. Residues 637 to 657 (IGMLCLYNGLTISAWNSLDVV) traverse the membrane as a helical segment. Topologically, residues 658–670 (TVELYPTDRRATG) are cytoplasmic. The chain crosses the membrane as a helical span at residues 671 to 693 (FGFLNALCKAAAVLGNLIFGSLV). Over 694 to 697 (SITK) the chain is Extracellular. The helical transmembrane segment at 698-716 (AIPILLASTVLVCGGLVGL) threads the bilayer. Over 717–727 (RLPDTRTQVLM) the chain is Cytoplasmic.

This sequence belongs to the major facilitator superfamily. Interacts with SYT1 in a calcium-dependent manner. As to quaternary structure, (Microbial infection) Interacts with C.botulinum neurotoxin type A (BoNT/A, botA). In terms of assembly, (Microbial infection) Interacts with C.botulinum neurotoxin type D (BoNT/D, botD). N-glycosylated. In terms of tissue distribution, expressed in specific subsets of conventional synapses in the retina (at protein level). Expressed in diaphragm motor nerve terminals (at protein level). Expressed in a subset of hippocampus neurons (at protein level).

The protein localises to the cytoplasmic vesicle. It localises to the secretory vesicle. Its subcellular location is the synaptic vesicle membrane. Plays a role in the control of regulated secretion in neural and endocrine cells, enhancing selectively low-frequency neurotransmission. Positively regulates vesicle fusion by maintaining the readily releasable pool of secretory vesicles. In terms of biological role, (Microbial infection) Receptor for C.botulinum neurotoxin type A (BoNT/A, botA); the toxin binds Sv2c via extracellular loop 4. Its function is as follows. (Microbial infection) Possible receptor for C.botulinum neurotoxin type D (BoNT/D, botD). The polypeptide is Synaptic vesicle glycoprotein 2C (Sv2c) (Mus musculus (Mouse)).